A 1373-amino-acid polypeptide reads, in one-letter code: DNA-directed RNA polymerase subunit beta (1373 aa).

This sequence belongs to the RNA polymerase beta chain family. In terms of assembly, the RNAP catalytic core consists of 2 alpha, 1 beta, 1 beta' and 1 omega subunit. When a sigma factor is associated with the core the holoenzyme is formed, which can initiate transcription.

It catalyses the reaction RNA(n) + a ribonucleoside 5'-triphosphate = RNA(n+1) + diphosphate. In terms of biological role, DNA-dependent RNA polymerase catalyzes the transcription of DNA into RNA using the four ribonucleoside triphosphates as substrates. The chain is DNA-directed RNA polymerase subunit beta from Rhodopseudomonas palustris (strain BisB18).